Consider the following 193-residue polypeptide: Transmembrane protein 066L (193 aa).

The next 2 helical transmembrane spans lie at 14-34 (VLFA…GLVW) and 48-68 (LVVE…LVVV).

Belongs to the IIV-6 357R family.

The protein localises to the membrane. This chain is Transmembrane protein 066L, found in Invertebrate iridescent virus 3 (IIV-3).